The following is a 495-amino-acid chain: Cytochrome P450 2E1 (495 aa).

298–303 (FAGTET) lines the substrate pocket. Position 437 (cysteine 437) interacts with heme.

Belongs to the cytochrome P450 family. Interacts with chaperones HSP70 and HSP90; this interaction is required for initial targeting to mitochondria. Heme is required as a cofactor.

It localises to the endoplasmic reticulum membrane. It is found in the microsome membrane. The protein resides in the mitochondrion inner membrane. It catalyses the reaction an organic molecule + reduced [NADPH--hemoprotein reductase] + O2 = an alcohol + oxidized [NADPH--hemoprotein reductase] + H2O + H(+). The catalysed reaction is (5Z,8Z,11Z)-eicosatrienoate + reduced [NADPH--hemoprotein reductase] + O2 = 19-hydroxy-(5Z,8Z,11Z)-eicosatrienoate + oxidized [NADPH--hemoprotein reductase] + H2O + H(+). It carries out the reaction (5Z,8Z,11Z,14Z,17Z)-eicosapentaenoate + reduced [NADPH--hemoprotein reductase] + O2 = 19-hydroxy-(5Z,8Z,11Z,14Z,17Z)-eicosapentaenoate + oxidized [NADPH--hemoprotein reductase] + H2O + H(+). The enzyme catalyses (4Z,7Z,10Z,13Z,16Z,19Z)-docosahexaenoate + reduced [NADPH--hemoprotein reductase] + O2 = 21-hydroxy-(4Z,7Z,10Z,13Z,16Z,19Z)-docosahexaenoate + oxidized [NADPH--hemoprotein reductase] + H2O + H(+). It catalyses the reaction dodecanoate + reduced [NADPH--hemoprotein reductase] + O2 = 11-hydroxydodecanoate + oxidized [NADPH--hemoprotein reductase] + H2O + H(+). The catalysed reaction is tetradecanoate + reduced [NADPH--hemoprotein reductase] + O2 = 13-hydroxytetradecanoate + oxidized [NADPH--hemoprotein reductase] + H2O + H(+). It carries out the reaction 4-nitrophenol + NADPH + O2 + H(+) = 4-nitrocatechol + NADP(+) + H2O. Its pathway is lipid metabolism; fatty acid metabolism. The omega-1 hydroxylase activity is stimulated by cytochrome b5. Functionally, a cytochrome P450 monooxygenase involved in the metabolism of fatty acids. Mechanistically, uses molecular oxygen inserting one oxygen atom into a substrate, and reducing the second into a water molecule, with two electrons provided by NADPH via cytochrome P450 reductase (NADPH--hemoprotein reductase). Catalyzes the hydroxylation of carbon-hydrogen bonds. Hydroxylates fatty acids specifically at the omega-1 position displaying the highest catalytic activity for saturated fatty acids. May be involved in the oxidative metabolism of xenobiotics. This is Cytochrome P450 2E1 (CYP2E1) from Bos taurus (Bovine).